The sequence spans 176 residues: Deoxyuridine 5'-triphosphate nucleotidohydrolase (176 aa).

Residues arginine 67–glycine 69, asparagine 80, threonine 84–aspartate 86, and lysine 94 each bind substrate. The interval glycine 141–glutamine 176 is disordered.

It belongs to the dUTPase family. The cofactor is Mg(2+).

The catalysed reaction is dUTP + H2O = dUMP + diphosphate + H(+). Its pathway is pyrimidine metabolism; dUMP biosynthesis; dUMP from dCTP (dUTP route): step 2/2. In terms of biological role, this enzyme is involved in nucleotide metabolism: it produces dUMP, the immediate precursor of thymidine nucleotides and it decreases the intracellular concentration of dUTP so that uracil cannot be incorporated into DNA. The polypeptide is Deoxyuridine 5'-triphosphate nucleotidohydrolase (Streptomyces griseus subsp. griseus (strain JCM 4626 / CBS 651.72 / NBRC 13350 / KCC S-0626 / ISP 5235)).